The primary structure comprises 574 residues: 5'-nucleotidase (574 aa).

The first 26 residues, 1 to 26, serve as a signal peptide directing secretion; the sequence is MCPRAARAPATLLLALGAVLWPAAGA. 2 residues coordinate Zn(2+): D36 and H38. C51 and C57 form a disulfide bridge. N53 is a glycosylation site (N-linked (GlcNAc...) asparagine). The Zn(2+) site is built by D85, N117, H220, and H243. Residues N311 and N333 are each glycosylated (N-linked (GlcNAc...) asparagine). 2 disulfide bridges follow: C353-C358 and C365-C387. Residue R354 participates in AMP binding. R354 is a binding site for IMP. AMP-binding residues include N390 and R395. IMP-binding residues include N390 and R395. A glycan (N-linked (GlcNAc...) asparagine) is linked at N403. F417 provides a ligand contact to AMP. Residue F417 coordinates IMP. The cysteines at positions 476 and 479 are disulfide-linked. Residues F500 and D506 each coordinate AMP. 2 residues coordinate IMP: F500 and D506. Residue S549 is the site of GPI-anchor amidated serine attachment. Residues 550–574 constitute a propeptide, removed in mature form; the sequence is TGSHCHGSFSLIFLSLWAVIFVLYQ.

This sequence belongs to the 5'-nucleotidase family. As to quaternary structure, homodimer. Zn(2+) is required as a cofactor.

The protein resides in the cell membrane. The enzyme catalyses a ribonucleoside 5'-phosphate + H2O = a ribonucleoside + phosphate. The catalysed reaction is a 2'-deoxyribonucleoside 5'-phosphate + H2O = a 2'-deoxyribonucleoside + phosphate. It catalyses the reaction dTMP + H2O = thymidine + phosphate. It carries out the reaction CMP + H2O = cytidine + phosphate. The enzyme catalyses IMP + H2O = inosine + phosphate. The catalysed reaction is AMP + H2O = adenosine + phosphate. It catalyses the reaction GMP + H2O = guanosine + phosphate. It carries out the reaction UMP + H2O = uridine + phosphate. The enzyme catalyses dAMP + H2O = 2'-deoxyadenosine + phosphate. The catalysed reaction is dCMP + H2O = 2'-deoxycytidine + phosphate. With respect to regulation, inhibited by adenosine 5'-(alpha,beta-methylene)-diphosphate (AMPCP). Catalyzes the hydrolysis of nucleotide monophosphates, releasing inorganic phosphate and the corresponding nucleoside, with AMP being the preferred substrate. Shows a preference for ribonucleotide monophosphates over their equivalent deoxyribose forms. Other substrates include IMP, UMP, GMP, CMP, dAMP, dCMP, dTMP, NAD and NMN. In Homo sapiens (Human), this protein is 5'-nucleotidase (NT5E).